Here is a 263-residue protein sequence, read N- to C-terminus: H-2 class II histocompatibility antigen, A-K beta chain (263 aa).

A signal peptide spans 1–27; sequence MALQIPSLLLLAAVVVLTVLSSPGTEG. Positions 28-120 are beta-1; sequence GNSERHFVHQ…TETPTSLRRL (93 aa). Over 28-224 the chain is Extracellular; it reads GNSERHFVHQ…RAQSESARSK (197 aa). 2 cysteine pairs are disulfide-bonded: Cys42–Cys104 and Cys143–Cys199. A glycan (N-linked (GlcNAc...) asparagine) is linked at Asn46. Residues 121–214 form a beta-2 region; it reads EQPSVVISLS…SLKSPITVEW (94 aa). Positions 123–211 constitute an Ig-like C1-type domain; the sequence is PSVVISLSRT…EHPSLKSPIT (89 aa). The tract at residues 215 to 224 is connecting peptide; that stretch reads RAQSESARSK. The helical transmembrane segment at 225–245 threads the bilayer; the sequence is MLSGIGGCVLGVIFLGLGLFI. The Cytoplasmic portion of the chain corresponds to 246 to 263; it reads RHRSQKGPRGPPPAGLLQ.

The protein belongs to the MHC class II family. Ubiquitinated in immature dendritic cells leading to down-regulation of MHC class II.

The protein resides in the membrane. The protein is H-2 class II histocompatibility antigen, A-K beta chain (H2-Ab1) of Mus musculus (Mouse).